The primary structure comprises 401 residues: Argininosuccinate synthase (401 aa).

9–17 (AYSGGLDTS) provides a ligand contact to ATP. Residue Tyr86 coordinates L-citrulline. ATP is bound at residue Gly116. L-aspartate is bound by residues Thr118, Asn122, and Asp123. Asn122 serves as a coordination point for L-citrulline. L-citrulline is bound by residues Arg126, Ser174, Ser183, Glu259, and Tyr271.

The protein belongs to the argininosuccinate synthase family. Type 1 subfamily. In terms of assembly, homotetramer.

It localises to the cytoplasm. The enzyme catalyses L-citrulline + L-aspartate + ATP = 2-(N(omega)-L-arginino)succinate + AMP + diphosphate + H(+). It participates in amino-acid biosynthesis; L-arginine biosynthesis; L-arginine from L-ornithine and carbamoyl phosphate: step 2/3. The polypeptide is Argininosuccinate synthase (Bacillus thuringiensis (strain Al Hakam)).